The chain runs to 269 residues: uncharacterized protein (269 aa).

Residues 181–191 (QKKELSPHEIA) show a composition bias toward basic and acidic residues. Residues 181 to 203 (QKKELSPHEIAESPSSHSTSPMG) form a disordered region. The span at 193–202 (SPSSHSTSPM) shows a compositional bias: polar residues. S200 bears the Phosphoserine mark.

This is an uncharacterized protein from Schizosaccharomyces pombe (strain 972 / ATCC 24843) (Fission yeast).